Reading from the N-terminus, the 657-residue chain is Leishmanolysin (657 aa).

The signal sequence occupies residues 1–41; the sequence is MSVDSSSSSTHRRRCVAARLVRLAAAGAAVTVAVGTAAAWA. Positions 42–102 are cleaved as a propeptide — activation peptide; it reads HAGALQHRCI…DPRPGSAPTV (61 aa). At 44–611 the chain is on the extracellular side; it reads GALQHRCIHD…DRMVGLATAA (568 aa). An N-linked (GlcNAc...) asparagine glycan is attached at Asn-107. Cystine bridges form between Cys-127–Cys-144 and Cys-193–Cys-232. A Zn(2+)-binding site is contributed by His-266. Glu-267 is a catalytic residue. Zn(2+) is bound at residue His-270. Residue Asn-302 is glycosylated (N-linked (GlcNAc...) asparagine). 7 disulfides stabilise this stretch: Cys-316–Cys-388, Cys-395–Cys-458, Cys-408–Cys-427, Cys-417–Cys-492, Cys-469–Cys-513, Cys-518–Cys-568, and Cys-538–Cys-561. His-336 is a Zn(2+) binding site. N-linked (GlcNAc...) asparagine glycans are attached at residues Asn-399, Asn-409, Asn-445, Asn-466, and Asn-501. The chain crosses the membrane as a helical span at residues 612 to 632; sequence TVLLGMVLSLMALVVVWLLLV. Residues 633 to 657 lie on the Cytoplasmic side of the membrane; sequence SCPWWCCKLGGPPASVTPACSPETE.

It belongs to the peptidase M8 family. Zn(2+) is required as a cofactor.

The protein localises to the membrane. The enzyme catalyses Preference for hydrophobic residues at P1 and P1' and basic residues at P2' and P3'. A model nonapeptide is cleaved at -Ala-Tyr-|-Leu-Lys-Lys-.. Has an integral role during the infection of macrophages in the mammalian host. The polypeptide is Leishmanolysin (mspC) (Leishmania tropica).